A 1216-amino-acid chain; its full sequence is SPOC domain-containing protein 1 (1216 aa).

Disordered regions lie at residues 1–74 (MSQA…RAAG), 166–216 (EARD…GAHS), 236–325 (NLLS…PPQS), 348–462 (RTGS…PRLE), and 511–601 (SSPS…QQEK). Residues 36 to 50 (PGLSPDGPGASSGPG) show a composition bias toward low complexity. Residues 177–190 (CDRRSPTLSKEEPP) show a composition bias toward basic and acidic residues. A compositionally biased stretch (basic residues) spans 204 to 213 (RVRKKWRRQG). The segment covering 266–278 (SGPGEPGGSGAGC) has biased composition (gly residues). The segment covering 314–325 (SLSSAAQAPPQS) has biased composition (low complexity). Positions 436-452 (RGTDRSSDNSHQDRPEE) are enriched in basic and acidic residues. Residues 581–592 (EAEEDSLPEQPE) show a composition bias toward acidic residues. The region spanning 608–728 (VRGTVVRSMQ…IIEQQQKEPC (121 aa)) is the TFIIS central domain. A disordered region spans residues 823–850 (QTPMPAPEMPKTRELSPTEPQDRVPPSG). Positions 832–844 (PKTRELSPTEPQD) are enriched in basic and acidic residues. The SPOC domain maps to 867–970 (WEGVLDMFSI…VEHMGMVLLP (104 aa)). Basic and acidic residues predominate over residues 1046–1055 (RYYQPDDRRP). Disordered stretches follow at residues 1046–1140 (RYYQ…QHFH) and 1176–1216 (PRPL…PRKA).

In terms of assembly, interacts with DNMT3A, DNMT3C and DNMT3L. Interacts with C19orf84. Interacts with SPIN1; promoting recruitment to transposons marked with histone H3 trimethylated at both 'Lys-4' and 'Lys-9' (H3K4me3K9me3).

The protein resides in the nucleus. Its subcellular location is the chromosome. Functionally, protein adapter that acts as an essential executor of PIWIL4-piRNA pathway directed transposon DNA methylation and silencing in the male embryonic germ cells. Recruited to young transposons, which are specifically marked with histone H3 trimethylated at both 'Lys-4' and 'Lys-9' (H3K4me3K9me3), via its association with SPIN1 chromatin reader, and associates with the de novo DNA methylation machinery and repressive chromatin remodeling complexes. Following this, PIWIL4 engages with nascent transposable element transcript to direct piRNA-directed DNA methylation. Not required for piRNA biosynthesis. The protein is SPOC domain-containing protein 1 of Homo sapiens (Human).